A 676-amino-acid polypeptide reads, in one-letter code: Kojibiose hydrolase (676 aa).

Residues 1–20 (MNKGIIQLLALSLFCISVKA) form the signal peptide. Catalysis depends on glutamate 469, which acts as the Proton donor. Glutamate 613 acts as the Proton acceptor in catalysis.

This sequence belongs to the glycosyl hydrolase 65 family.

The enzyme catalyses kojibiose + H2O = beta-D-glucose + D-glucose. Functionally, glycosidase that specifically hydrolyzes kojibiose to beta-glucose and glucose. Besides its activity on kojibiose, is also able to act on alpha-1,2-oligoglucans with a higher degree of polymerization. Shows weak activity on nigerose, but is not capable of breaking down trehalose, maltose, isomaltose, sucrose, isomaltulose, turanose or melezitose. The protein is Kojibiose hydrolase of Mucilaginibacter mallensis.